The primary structure comprises 586 residues: ATP-dependent lipid A-core flippase (586 aa).

The next 4 helical transmembrane spans lie at 25–45, 74–94, 163–183, and 264–284; these read AYFIISFIGFGVFAAMEAQLI, LWFVPISVVVLSIIRGIGAYF, VAWFLAMMLIINWKLTLAFIC, and VLHIVLALALAVTFYLIMILW. Residues 28–317 form the ABC transmembrane type-1 domain; sequence IISFIGFGVF…LTKINSIIQK (290 aa). An ABC transporter domain is found at 349 to 583; that stretch reads VELKDVHFGY…SGVYANLYHS (235 aa). 382 to 389 contacts ATP; it reads GSSGSGKS.

It belongs to the ABC transporter superfamily. Lipid exporter (TC 3.A.1.106) family. Homodimer.

It is found in the cell inner membrane. The catalysed reaction is ATP + H2O + lipid A-core oligosaccharideSide 1 = ADP + phosphate + lipid A-core oligosaccharideSide 2.. Involved in lipopolysaccharide (LPS) biosynthesis. Translocates lipid A-core from the inner to the outer leaflet of the inner membrane. Transmembrane domains (TMD) form a pore in the inner membrane and the ATP-binding domain (NBD) is responsible for energy generation. The chain is ATP-dependent lipid A-core flippase from Saccharophagus degradans (strain 2-40 / ATCC 43961 / DSM 17024).